The chain runs to 757 residues: uncharacterized protein (757 aa).

This is an uncharacterized protein from Dictyostelium discoideum (Social amoeba).